The sequence spans 294 residues: 4-hydroxy-tetrahydrodipicolinate synthase (294 aa).

Position 47 (T47) interacts with pyruvate. Y135 acts as the Proton donor/acceptor in catalysis. K163 functions as the Schiff-base intermediate with substrate in the catalytic mechanism. T205 provides a ligand contact to pyruvate.

This sequence belongs to the DapA family. As to quaternary structure, homotetramer; dimer of dimers.

The protein localises to the cytoplasm. The enzyme catalyses L-aspartate 4-semialdehyde + pyruvate = (2S,4S)-4-hydroxy-2,3,4,5-tetrahydrodipicolinate + H2O + H(+). It functions in the pathway amino-acid biosynthesis; L-lysine biosynthesis via DAP pathway; (S)-tetrahydrodipicolinate from L-aspartate: step 3/4. In terms of biological role, catalyzes the condensation of (S)-aspartate-beta-semialdehyde [(S)-ASA] and pyruvate to 4-hydroxy-tetrahydrodipicolinate (HTPA). This chain is 4-hydroxy-tetrahydrodipicolinate synthase, found in Rickettsia akari (strain Hartford).